Reading from the N-terminus, the 83-residue chain is Mu-theraphotoxin-Hhn2j 4 (83 aa).

A signal peptide spans 1–21; sequence MKASMFLALAGSVLLFVVGYA. The propeptide occupies 22-48; that stretch reads SESEEKEFPIELLSKIFAVDVFKGEER. 3 cysteine pairs are disulfide-bonded: cysteine 50/cysteine 65, cysteine 57/cysteine 70, and cysteine 64/cysteine 77. A Leucine amide modification is found at leucine 81.

Belongs to the neurotoxin 10 (Hwtx-1) family. 15 (Hntx-3) subfamily. In terms of assembly, monomer. As to expression, expressed by the venom gland.

The protein resides in the secreted. Lethal neurotoxin. Selectively blocks tetrodotoxin-sensitive voltage-gated sodium channels (Nav). Does not affect tetrodotoxin-resistant voltage-gated sodium channels or calcium channels. The protein is Mu-theraphotoxin-Hhn2j 4 of Cyriopagopus hainanus (Chinese bird spider).